The chain runs to 98 residues: Integration host factor subunit alpha (98 aa).

The segment at 49-71 is disordered; it reads FGNFDLRDKNQRPGRNPKTGEDI.

It belongs to the bacterial histone-like protein family. Heterodimer of an alpha and a beta chain.

Functionally, this protein is one of the two subunits of integration host factor, a specific DNA-binding protein that functions in genetic recombination as well as in transcriptional and translational control. The chain is Integration host factor subunit alpha from Edwardsiella ictaluri (strain 93-146).